Here is a 147-residue protein sequence, read N- to C-terminus: D-aminoacyl-tRNA deacylase (147 aa).

The short motif at 136–137 (GP) is the Gly-cisPro motif, important for rejection of L-amino acids element.

The protein belongs to the DTD family. Homodimer.

The protein localises to the cytoplasm. The enzyme catalyses glycyl-tRNA(Ala) + H2O = tRNA(Ala) + glycine + H(+). The catalysed reaction is a D-aminoacyl-tRNA + H2O = a tRNA + a D-alpha-amino acid + H(+). An aminoacyl-tRNA editing enzyme that deacylates mischarged D-aminoacyl-tRNAs. Also deacylates mischarged glycyl-tRNA(Ala), protecting cells against glycine mischarging by AlaRS. Acts via tRNA-based rather than protein-based catalysis; rejects L-amino acids rather than detecting D-amino acids in the active site. By recycling D-aminoacyl-tRNA to D-amino acids and free tRNA molecules, this enzyme counteracts the toxicity associated with the formation of D-aminoacyl-tRNA entities in vivo and helps enforce protein L-homochirality. This chain is D-aminoacyl-tRNA deacylase, found in Streptococcus pyogenes serotype M1.